The primary structure comprises 197 residues: Proteasome subunit beta 1 (197 aa).

Positions 1–6 are cleaved as a propeptide — removed in mature form; by autocatalysis; it reads MNRKTG. Thr-7 functions as the Nucleophile in the catalytic mechanism.

It belongs to the peptidase T1B family. As to quaternary structure, the 20S proteasome core is composed of 14 alpha and 14 beta subunits that assemble into four stacked heptameric rings, resulting in a barrel-shaped structure. The two inner rings, each composed of seven catalytic beta subunits, are sandwiched by two outer rings, each composed of seven alpha subunits. The catalytic chamber with the active sites is on the inside of the barrel. Has a gated structure, the ends of the cylinder being occluded by the N-termini of the alpha-subunits. Is capped at one or both ends by the proteasome regulatory ATPase, PAN.

The protein localises to the cytoplasm. It catalyses the reaction Cleavage of peptide bonds with very broad specificity.. Its activity is regulated as follows. The formation of the proteasomal ATPase PAN-20S proteasome complex, via the docking of the C-termini of PAN into the intersubunit pockets in the alpha-rings, triggers opening of the gate for substrate entry. Interconversion between the open-gate and close-gate conformations leads to a dynamic regulation of the 20S proteasome proteolysis activity. Component of the proteasome core, a large protease complex with broad specificity involved in protein degradation. This chain is Proteasome subunit beta 1, found in Pyrococcus horikoshii (strain ATCC 700860 / DSM 12428 / JCM 9974 / NBRC 100139 / OT-3).